Reading from the N-terminus, the 134-residue chain is UPF0412 protein YaaI (134 aa).

The N-terminal stretch at 1–23 (MKSVITISASLAISLMLCCTAQA) is a signal peptide.

It belongs to the UPF0412 family.

This is UPF0412 protein YaaI from Escherichia coli (strain UTI89 / UPEC).